Here is a 229-residue protein sequence, read N- to C-terminus: Heptaprenylglyceryl phosphate synthase (229 aa).

K12 serves as a coordination point for sn-glycerol 1-phosphate. D14 and S40 together coordinate Mg(2+). Sn-glycerol 1-phosphate contacts are provided by residues 159 to 164, G189, and 209 to 210; these read YLEYSG and GN.

This sequence belongs to the GGGP/HepGP synthase family. Group I subfamily. Homodimer. It depends on Mg(2+) as a cofactor.

It carries out the reaction sn-glycerol 1-phosphate + all-trans-heptaprenyl diphosphate = 3-heptaprenyl-sn-glycero-1-phosphate + diphosphate. Its pathway is membrane lipid metabolism; glycerophospholipid metabolism. Functionally, prenyltransferase that catalyzes in vivo the transfer of the heptaprenyl moiety of heptaprenyl pyrophosphate (HepPP; 35 carbon atoms) to the C3 hydroxyl of sn-glycerol-1-phosphate (G1P), producing heptaprenylglyceryl phosphate (HepGP). This reaction is an ether-bond-formation step in the biosynthesis of archaea-type G1P-based membrane lipids found in Bacillales. The polypeptide is Heptaprenylglyceryl phosphate synthase (Bacillus thuringiensis (strain Al Hakam)).